Consider the following 110-residue polypeptide: Cytochrome c6 (110 aa).

Positions 1–25 are cleaved as a signal peptide; it reads MKKLVSSVILALILFGFSWVSPAFA. Heme c-binding residues include Cys-39, Cys-42, His-43, and Met-83.

It belongs to the cytochrome c family. PetJ subfamily. In terms of assembly, monomer. Post-translationally, binds 1 heme c group covalently per subunit.

Its subcellular location is the cellular thylakoid lumen. Functions as an electron carrier between membrane-bound cytochrome b6-f and photosystem I in oxygenic photosynthesis. This is Cytochrome c6 from Gloeothece citriformis (strain PCC 7424) (Cyanothece sp. (strain PCC 7424)).